Reading from the N-terminus, the 1219-residue chain is Pheromone-regulated membrane protein 10 (1219 aa).

Over residues 1 to 11 (MMRTQSDEHVA) the composition is skewed to basic and acidic residues. Disordered stretches follow at residues 1-273 (MMRT…IERE), 303-490 (LASF…DPFT), 503-533 (HDDD…EDYV), and 555-713 (EGNK…RPVK). Residues 42–53 (DENDDGHDDSDE) are compositionally biased toward acidic residues. The span at 57–68 (SVVIPTPSVVIV) shows a compositional bias: low complexity. Over residues 104–115 (LKSPGTPTTYSP) the composition is skewed to polar residues. The segment covering 136 to 155 (GSSLSSTTLMNTLLNSSGLG) has biased composition (low complexity). Composition is skewed to acidic residues over residues 159–171 (TESE…DEEV) and 219–231 (QEEE…DDDG). Basic and acidic residues-rich tracts occupy residues 259-273 (ADRA…IERE), 330-346 (DDQR…RREN), and 395-421 (LDRR…EKER). Residues 422 to 432 (QHHHHNHHHHH) are compositionally biased toward basic residues. Residues 435 to 446 (ETGPNTGASSPF) show a composition bias toward polar residues. Positions 448–470 (EEEKDREAEEAEILRDQARDLVN) are enriched in basic and acidic residues. The span at 565–577 (TTVGDGTSTGDVS) shows a compositional bias: low complexity. Residues 598–615 (KSKTKTTQKLGLKKKKKE) are compositionally biased toward basic residues. The span at 616–641 (LLKIIEDQRKEKEENKKRPKWYDKSR) shows a compositional bias: basic and acidic residues. Low complexity predominate over residues 642 to 652 (STSPSPGGTPA). A compositionally biased stretch (basic residues) spans 653–673 (PHHHHHIPGLHLHHHTKGHQR). Residues 693 to 713 (GGDKPPDRPRSLRSEALRPVK) are compositionally biased toward basic and acidic residues. A run of 10 helical transmembrane segments spans residues 864-884 (PPWL…PYAF), 888-908 (WADI…QIIV), 918-938 (VFEV…GTIS), 945-965 (FCFA…YIVL), 983-1003 (MFYA…GAVV), 1021-1041 (LDPL…ALVN), 1049-1069 (PSML…GANI), 1075-1095 (SSYL…NLYS), 1100-1120 (GLAF…GVAS), and 1184-1204 (LGFT…AATL).

It belongs to the ThrE exporter (TC 2.A.79) family.

The protein localises to the membrane. The sequence is that of Pheromone-regulated membrane protein 10 from Yarrowia lipolytica (strain CLIB 122 / E 150) (Yeast).